The following is a 55-amino-acid chain: Ferredoxin (55 aa).

4Fe-4S ferredoxin-type domains lie at 2 to 27 (YKIT…SESD) and 28 to 55 (AVRV…IVEG). The [4Fe-4S] cluster site is built by Cys8, Cys11, Cys14, Cys18, Cys37, Cys40, Cys43, and Cys47.

[4Fe-4S] cluster serves as cofactor.

In terms of biological role, ferredoxins are iron-sulfur proteins that transfer electrons in a wide variety of metabolic reactions. The sequence is that of Ferredoxin from Clostridium sp. (strain M-E).